Here is a 250-residue protein sequence, read N- to C-terminus: NADH-quinone oxidoreductase subunit C (250 aa).

The segment at 193–250 (GMTPPLPGDEKADMPPIDDPMVTEGPEDTGAGARANAKAAEGTPADPPAMDDEEEDDA) is disordered. Low complexity predominate over residues 222–236 (GAGARANAKAAEGTP). The span at 241-250 (AMDDEEEDDA) shows a compositional bias: acidic residues.

This sequence belongs to the complex I 30 kDa subunit family. NDH-1 is composed of 14 different subunits. Subunits NuoB, C, D, E, F, and G constitute the peripheral sector of the complex.

It localises to the cell inner membrane. The enzyme catalyses a quinone + NADH + 5 H(+)(in) = a quinol + NAD(+) + 4 H(+)(out). In terms of biological role, NDH-1 shuttles electrons from NADH, via FMN and iron-sulfur (Fe-S) centers, to quinones in the respiratory chain. The immediate electron acceptor for the enzyme in this species is believed to be ubiquinone. Couples the redox reaction to proton translocation (for every two electrons transferred, four hydrogen ions are translocated across the cytoplasmic membrane), and thus conserves the redox energy in a proton gradient. This Erythrobacter litoralis (strain HTCC2594) protein is NADH-quinone oxidoreductase subunit C.